A 214-amino-acid polypeptide reads, in one-letter code: Holliday junction branch migration complex subunit RuvA (214 aa).

The segment at 1–63 (MISSLRGTVL…EDSLTLFGFP (63 aa)) is domain I. The interval 64–139 (GPDELRAFEL…KLFVTQPRTR (76 aa)) is domain II. The flexible linker stretch occupies residues 139-143 (RSASS). The interval 144-214 (AASTVTADVV…APAAAQAADR (71 aa)) is domain III.

Belongs to the RuvA family. Homotetramer. Forms an RuvA(8)-RuvB(12)-Holliday junction (HJ) complex. HJ DNA is sandwiched between 2 RuvA tetramers; dsDNA enters through RuvA and exits via RuvB. An RuvB hexamer assembles on each DNA strand where it exits the tetramer. Each RuvB hexamer is contacted by two RuvA subunits (via domain III) on 2 adjacent RuvB subunits; this complex drives branch migration. In the full resolvosome a probable DNA-RuvA(4)-RuvB(12)-RuvC(2) complex forms which resolves the HJ.

Its subcellular location is the cytoplasm. The RuvA-RuvB-RuvC complex processes Holliday junction (HJ) DNA during genetic recombination and DNA repair, while the RuvA-RuvB complex plays an important role in the rescue of blocked DNA replication forks via replication fork reversal (RFR). RuvA specifically binds to HJ cruciform DNA, conferring on it an open structure. The RuvB hexamer acts as an ATP-dependent pump, pulling dsDNA into and through the RuvAB complex. HJ branch migration allows RuvC to scan DNA until it finds its consensus sequence, where it cleaves and resolves the cruciform DNA. In Clavibacter sepedonicus (Clavibacter michiganensis subsp. sepedonicus), this protein is Holliday junction branch migration complex subunit RuvA.